We begin with the raw amino-acid sequence, 185 residues long: Ribosome-recycling factor (185 aa).

Belongs to the RRF family.

Its subcellular location is the cytoplasm. In terms of biological role, responsible for the release of ribosomes from messenger RNA at the termination of protein biosynthesis. May increase the efficiency of translation by recycling ribosomes from one round of translation to another. The chain is Ribosome-recycling factor from Sodalis glossinidius (strain morsitans).